The following is a 192-amino-acid chain: Protein Syd (192 aa).

It belongs to the Syd family.

It is found in the cell inner membrane. Its function is as follows. Interacts with the SecY protein in vivo. May bind preferentially to an uncomplexed state of SecY, thus functioning either as a chelating agent for excess SecY in the cell or as a regulatory factor that negatively controls the translocase function. This Hahella chejuensis (strain KCTC 2396) protein is Protein Syd.